A 209-amino-acid polypeptide reads, in one-letter code: Putative NAD(P)H nitroreductase YdgI (209 aa).

FMN-binding positions include 14–16, 72–74, 161–162, and Arg-199; these read RRS, QTQ, and GG.

The protein belongs to the nitroreductase family. FMN is required as a cofactor.

The chain is Putative NAD(P)H nitroreductase YdgI (ydgI) from Bacillus subtilis (strain 168).